The sequence spans 394 residues: Formate-dependent phosphoribosylglycinamide formyltransferase (394 aa).

Residues 21–22 (EL) and Glu81 contribute to the N(1)-(5-phospho-beta-D-ribosyl)glycinamide site. ATP contacts are provided by residues Arg113, Lys154, 159 to 164 (SSGKGQ), 194 to 197 (EEFI), and Glu202. The ATP-grasp domain maps to 118–307 (RLAAEELGLP…QFELHVRAIL (190 aa)). Mg(2+) is bound by residues Glu266 and Glu278. N(1)-(5-phospho-beta-D-ribosyl)glycinamide contacts are provided by residues Asp285, Lys355, and 362–363 (RR).

It belongs to the PurK/PurT family. As to quaternary structure, homodimer.

The enzyme catalyses N(1)-(5-phospho-beta-D-ribosyl)glycinamide + formate + ATP = N(2)-formyl-N(1)-(5-phospho-beta-D-ribosyl)glycinamide + ADP + phosphate + H(+). It participates in purine metabolism; IMP biosynthesis via de novo pathway; N(2)-formyl-N(1)-(5-phospho-D-ribosyl)glycinamide from N(1)-(5-phospho-D-ribosyl)glycinamide (formate route): step 1/1. Its function is as follows. Involved in the de novo purine biosynthesis. Catalyzes the transfer of formate to 5-phospho-ribosyl-glycinamide (GAR), producing 5-phospho-ribosyl-N-formylglycinamide (FGAR). Formate is provided by PurU via hydrolysis of 10-formyl-tetrahydrofolate. The chain is Formate-dependent phosphoribosylglycinamide formyltransferase from Pelobacter propionicus (strain DSM 2379 / NBRC 103807 / OttBd1).